Consider the following 366-residue polypeptide: Ribosomal RNA large subunit methyltransferase M (366 aa).

Residues Ser188, 221-224, Asp240, Asp260, and Asp277 contribute to the S-adenosyl-L-methionine site; that span reads CPGG. Residue Lys306 is the Proton acceptor of the active site.

The protein belongs to the class I-like SAM-binding methyltransferase superfamily. RNA methyltransferase RlmE family. RlmM subfamily. In terms of assembly, monomer.

The protein resides in the cytoplasm. The enzyme catalyses cytidine(2498) in 23S rRNA + S-adenosyl-L-methionine = 2'-O-methylcytidine(2498) in 23S rRNA + S-adenosyl-L-homocysteine + H(+). Its function is as follows. Catalyzes the 2'-O-methylation at nucleotide C2498 in 23S rRNA. This is Ribosomal RNA large subunit methyltransferase M from Salmonella newport (strain SL254).